A 1408-amino-acid polypeptide reads, in one-letter code: DNA-directed RNA polymerase subunit beta' (1408 aa).

Residues Cys-70, Cys-72, Cys-85, and Cys-88 each coordinate Zn(2+). Residues Asp-458, Asp-460, and Asp-462 each coordinate Mg(2+). The Zn(2+) site is built by Cys-813, Cys-887, Cys-894, and Cys-897. Positions 1387–1408 (AELEAATATAPADAGGDSPATE) are disordered. Residues 1389–1408 (LEAATATAPADAGGDSPATE) show a composition bias toward low complexity.

It belongs to the RNA polymerase beta' chain family. The RNAP catalytic core consists of 2 alpha, 1 beta, 1 beta' and 1 omega subunit. When a sigma factor is associated with the core the holoenzyme is formed, which can initiate transcription. Mg(2+) serves as cofactor. It depends on Zn(2+) as a cofactor.

The catalysed reaction is RNA(n) + a ribonucleoside 5'-triphosphate = RNA(n+1) + diphosphate. DNA-dependent RNA polymerase catalyzes the transcription of DNA into RNA using the four ribonucleoside triphosphates as substrates. This is DNA-directed RNA polymerase subunit beta' from Polaromonas sp. (strain JS666 / ATCC BAA-500).